The sequence spans 677 residues: Methionine--tRNA ligase (677 aa).

The 'HIGH' region motif lies at 15-25 (PYANGSIHLGH). Zn(2+)-binding residues include cysteine 146, cysteine 149, cysteine 159, and cysteine 162. Residues 333-337 (KMSKS) carry the 'KMSKS' region motif. Lysine 336 provides a ligand contact to ATP. The tRNA-binding domain occupies 575-677 (DFAKVDLRVA…AGAKPGHQVK (103 aa)).

Belongs to the class-I aminoacyl-tRNA synthetase family. MetG type 1 subfamily. Homodimer. Requires Zn(2+) as cofactor.

Its subcellular location is the cytoplasm. It carries out the reaction tRNA(Met) + L-methionine + ATP = L-methionyl-tRNA(Met) + AMP + diphosphate. In terms of biological role, is required not only for elongation of protein synthesis but also for the initiation of all mRNA translation through initiator tRNA(fMet) aminoacylation. In Escherichia fergusonii (strain ATCC 35469 / DSM 13698 / CCUG 18766 / IAM 14443 / JCM 21226 / LMG 7866 / NBRC 102419 / NCTC 12128 / CDC 0568-73), this protein is Methionine--tRNA ligase.